The chain runs to 503 residues: Probable cytosol aminopeptidase (503 aa).

Lys270 and Asp275 together coordinate Mn(2+). Residue Lys282 is part of the active site. Asp293, Asp352, and Glu354 together coordinate Mn(2+). The active site involves Arg356.

The protein belongs to the peptidase M17 family. Requires Mn(2+) as cofactor.

It localises to the cytoplasm. It carries out the reaction Release of an N-terminal amino acid, Xaa-|-Yaa-, in which Xaa is preferably Leu, but may be other amino acids including Pro although not Arg or Lys, and Yaa may be Pro. Amino acid amides and methyl esters are also readily hydrolyzed, but rates on arylamides are exceedingly low.. The catalysed reaction is Release of an N-terminal amino acid, preferentially leucine, but not glutamic or aspartic acids.. Presumably involved in the processing and regular turnover of intracellular proteins. Catalyzes the removal of unsubstituted N-terminal amino acids from various peptides. The chain is Probable cytosol aminopeptidase from Edwardsiella ictaluri (strain 93-146).